A 551-amino-acid polypeptide reads, in one-letter code: Colicin E3 (551 aa).

3 disordered regions span residues 1-74 (MSGG…SGGG), 243-269 (TLSP…NTRD), and 293-320 (PDQV…EAAE). The interval 1 to 315 (MSGGDGRGHN…RQQEWDATHP (315 aa)) is translocation (T) domain. Residues 20-35 (INGGPTGLGVGGGASD) are compositionally biased toward gly residues. A Binds to TolB motif is present at residues 35 to 39 (DGSGW). The span at 36 to 45 (GSGWSSENNP) shows a compositional bias: low complexity. Over residues 46–74 (WGGGSGSGIHWGGGSGHGNGGGNGNSGGG) the composition is skewed to gly residues. A compositionally biased stretch (basic and acidic residues) spans 296–320 (VKQRQDEENRRQQEWDATHPVEAAE). Residues 316–378 (VEAAERNYER…IAEIKQFNRF (63 aa)) adopt a coiled-coil conformation. The interval 316–450 (VEAAERNYER…SAENNLNDEK (135 aa)) is receptor-binding (R) domain. Positions 379–385 (AHDPMAG) match the Hairpin motif. Residues 386–450 (GHRMWQMAGL…SAENNLNDEK (65 aa)) are a coiled coil. The tract at residues 406–505 (NKQAAFDAAA…KRWTGDKGRK (100 aa)) is disordered. Over residues 430–472 (ESRKKKEDKKRSAENNLNDEKNKPRKGFKDYGHDYHPAPKTEN) the composition is skewed to basic and acidic residues. Positions 451 to 456 (NKPRKG) are linker. A ribosome inactivating activity region spans residues 455-551 (KGFKDYGHDY…DPKRNIKKYL (97 aa)). The cytotoxic RNase (C) domain stretch occupies residues 457–551 (FKDYGHDYHP…DPKRNIKKYL (95 aa)). H513 (proton donor) is an active-site residue. Residue E517 is the Proton acceptor of the active site. A disordered region spans residues 517 to 551 (EGYRASDGQHLGSFDPKTGNQLKGPDPKRNIKKYL). The segment at 530-551 (FDPKTGNQLKGPDPKRNIKKYL) is binding of immunity protein. R545 is an active-site residue.

It belongs to the cloacin colicin family. As to quaternary structure, native colicin E3 is a 1:1 complex of A chain and protein B (cognate immunity protein, Im3); protein A is 1,000-fold more active in inactivating ribosomes than the native complex. The cytotoxic fragment (residues 456-551, C95) forms a 1:1 complex with Im3. The receptor-binding (R) domain binds obliquely to its receptor BtuB without displacing BtuB's central plug; binding unfolds the R domain. The N-terminal 83 residues (T83) bind OmpF; trimeric complexes with colicin E3, BtuB and OmpF can be cross-linked and immunoprecipitated. Probably inserts into the OmpF pore as an unfolded peptide and spans the OmpF pore. In a complex with T.thermophilus 70S ribosomes, cytotoxic fragment C96 contacts 16S rRNA, 23S rRNA, mRNA, P-site tRNA and ribosomal protein uS12.

It localises to the secreted. In terms of biological role, colicins are polypeptide toxins produced by and active against E.coli and closely related bacteria. Cleaves 16S rRNA between adenosine-1492 and guanosine-1493 (E.coli 16S rRNA numbering), releasing a 49 nucleotide (nt) 'colicin' fragment. Inactivates 70S ribosomes or 30S subunits by endonucleolytically cleaving 16S RNA at a specific site about 50 nt from its C-terminus. Produces 5'-OH-guanosine and a 2',3'-cyclic phosphate adenosine. Mixing a susceptible (e.g. strain K12 / A19) and colicin E3 producing strain results in total protein translation inhibition within 11 minutes. Its activity is inhibited by cognate immunity protein Im3. Its function is as follows. Uses BtuB, the vitamin B transporter, as a receptor on the outer membrane; binds via the receptor (R) domain. Then the translocation domain (T) probably 'fishes' for its outer membrane translocon protein, OmpF. The N-terminal 83 residues (T83) can bind to and occlude OmpF channels. A complex of the cytotoxic C-terminal 96 residues (C96) plus the immunity protein does not occlude OmpF; upon complex separation from the immunity protein C96 becomes disordered and is able to bind OmpF. The N-terminus probably binds TolB and then reinserts into an empty pore of trimeric OmpF; the rest of the protein is pulled through OmpF and crosses the inner membrane, where the cytotoxic fragment is probably released by protease FtsH. In Escherichia coli, this protein is Colicin E3 (ceaC).